Consider the following 1081-residue polypeptide: Dyslexia-associated protein KIAA0319 homolog (1081 aa).

A signal peptide spans 1-22; that stretch reads MVSPPGVLSSLLLLAAMAGGSS. Residues 23 to 99 form the MANSC domain; it reads QQCSEGRTYS…PRTTGPIRSY (77 aa). The Extracellular portion of the chain corresponds to 23-964; that stretch reads QQCSEGRTYS…WDGESNCEWS (942 aa). 3 disordered regions span residues 141-160, 168-216, and 228-298; these read LPFLGKDGGPEETAEYSDDY, LQPS…DLTP, and NEST…TTVE. 3 stretches are compositionally biased toward polar residues: residues 197–209, 228–253, and 283–298; these read ASATGDNSAASTE, NESTWSPTPRHSEMSSMWPSSVTASP, and HNPSPASLESSPTTVE. 5 consecutive PKD domains span residues 345 to 436, 444 to 533, 539 to 629, 630 to 723, and 729 to 820; these read AVSA…VMPA, VAIV…IRGS, VANA…VQAE, NNQA…VKKE, and RAQA…VLPD. 2 N-linked (GlcNAc...) asparagine glycosylation sites follow: asparagine 430 and asparagine 522. Residues 965–985 form a helical membrane-spanning segment; it reads VFYVAALALTLTVLTGAVTWV. The Cytoplasmic portion of the chain corresponds to 986 to 1081; it reads CICCCRRRKR…VSFGYYSKDR (96 aa). Positions 1004 to 1007 match the Endocytosis signal motif; the sequence is YTIL.

Homodimer. Interacts with AP2M1; required for clathrin-mediated endocytosis. In terms of processing, N-glycosylated. Post-translationally, O-glycosylated. Shedding of the extracellular domain and intramembrane cleavage produce several proteolytic products. The intramembrane cleavage releases a soluble cytoplasmic polypeptide that translocates to the nucleolus. In terms of tissue distribution, highly expressed during development in ventricular zone, intermediate zone, cortical plate, striatum, hippocampus, and brain stem.

Its subcellular location is the cell membrane. The protein resides in the early endosome membrane. Involved in neuronal migration during development of the cerebral neocortex. May function in a cell autonomous and a non-cell autonomous manner and play a role in appropriate adhesion between migrating neurons and radial glial fibers. May also regulate growth and differentiation of dendrites. The chain is Dyslexia-associated protein KIAA0319 homolog from Rattus norvegicus (Rat).